We begin with the raw amino-acid sequence, 548 residues long: Chaperonin GroEL (548 aa).

ATP is bound by residues 30–33 (TLGP), lysine 51, 87–91 (DGTTT), glycine 415, and aspartate 495.

This sequence belongs to the chaperonin (HSP60) family. Forms a cylinder of 14 subunits composed of two heptameric rings stacked back-to-back. Interacts with the co-chaperonin GroES.

It is found in the cytoplasm. It carries out the reaction ATP + H2O + a folded polypeptide = ADP + phosphate + an unfolded polypeptide.. Its function is as follows. Together with its co-chaperonin GroES, plays an essential role in assisting protein folding. The GroEL-GroES system forms a nano-cage that allows encapsulation of the non-native substrate proteins and provides a physical environment optimized to promote and accelerate protein folding. The chain is Chaperonin GroEL from Erwinia tasmaniensis (strain DSM 17950 / CFBP 7177 / CIP 109463 / NCPPB 4357 / Et1/99).